The following is a 263-amino-acid chain: N-acyl homoserine lactonase AttM (263 aa).

Histidine 103, histidine 105, aspartate 107, histidine 108, histidine 180, aspartate 202, and histidine 247 together coordinate Zn(2+).

This sequence belongs to the metallo-beta-lactamase superfamily. Zn(2+) serves as cofactor.

It carries out the reaction an N-acyl-L-homoserine lactone + H2O = an N-acyl-L-homoserine + H(+). This is N-acyl homoserine lactonase AttM from Azorhizobium caulinodans (strain ATCC 43989 / DSM 5975 / JCM 20966 / LMG 6465 / NBRC 14845 / NCIMB 13405 / ORS 571).